We begin with the raw amino-acid sequence, 451 residues long: Chromosomal replication initiator protein DnaA 2 (451 aa).

Residues 1–68 (MQAWEEFLKA…QQKFINGNNK (68 aa)) are domain I, interacts with DnaA modulators. Residues 68–104 (KRIKIHLSVANTPQRAKKTKTANKEKDFKAPFELTFD) form a domain II region. The domain III, AAA+ region stretch occupies residues 105-326 (ELDPLCLFPY…KGLEALVLRL (222 aa)). 4 residues coordinate ATP: glycine 156, glycine 158, lysine 159, and threonine 160. Residues 327–451 (HLDAKHSITA…CHIILKKLQG (125 aa)) are domain IV, binds dsDNA.

Belongs to the DnaA family. In terms of assembly, oligomerizes as a right-handed, spiral filament on DNA at oriC.

The protein resides in the cytoplasm. Functionally, plays an essential role in the initiation and regulation of chromosomal replication. ATP-DnaA binds to the origin of replication (oriC) to initiate formation of the DNA replication initiation complex once per cell cycle. Binds the DnaA box (a 9 base pair repeat at the origin) and separates the double-stranded (ds)DNA. Forms a right-handed helical filament on oriC DNA; dsDNA binds to the exterior of the filament while single-stranded (ss)DNA is stabiized in the filament's interior. The ATP-DnaA-oriC complex binds and stabilizes one strand of the AT-rich DNA unwinding element (DUE), permitting loading of DNA polymerase. After initiation quickly degrades to an ADP-DnaA complex that is not apt for DNA replication. Binds acidic phospholipids. This is Chromosomal replication initiator protein DnaA 2 from Protochlamydia amoebophila (strain UWE25).